Reading from the N-terminus, the 355-residue chain is Holliday junction branch migration complex subunit RuvB (355 aa).

The tract at residues 4–190 (TDKLAAERII…FGIVARLEFY (187 aa)) is large ATPase domain (RuvB-L). ATP is bound by residues Leu29, Arg30, Gly71, Lys74, Thr75, Thr76, 137–139 (EDY), Arg180, Tyr190, and Arg227. Thr75 lines the Mg(2+) pocket. A small ATPAse domain (RuvB-S) region spans residues 191–261 (NAEQLARIVT…VADAALKMLD (71 aa)). The interval 264–355 (AVGFDLMDRK…LPGLWDSAAT (92 aa)) is head domain (RuvB-H). DNA-binding residues include Arg300, Arg319, and Arg324.

It belongs to the RuvB family. In terms of assembly, homohexamer. Forms an RuvA(8)-RuvB(12)-Holliday junction (HJ) complex. HJ DNA is sandwiched between 2 RuvA tetramers; dsDNA enters through RuvA and exits via RuvB. An RuvB hexamer assembles on each DNA strand where it exits the tetramer. Each RuvB hexamer is contacted by two RuvA subunits (via domain III) on 2 adjacent RuvB subunits; this complex drives branch migration. In the full resolvosome a probable DNA-RuvA(4)-RuvB(12)-RuvC(2) complex forms which resolves the HJ.

It is found in the cytoplasm. The catalysed reaction is ATP + H2O = ADP + phosphate + H(+). In terms of biological role, the RuvA-RuvB-RuvC complex processes Holliday junction (HJ) DNA during genetic recombination and DNA repair, while the RuvA-RuvB complex plays an important role in the rescue of blocked DNA replication forks via replication fork reversal (RFR). RuvA specifically binds to HJ cruciform DNA, conferring on it an open structure. The RuvB hexamer acts as an ATP-dependent pump, pulling dsDNA into and through the RuvAB complex. RuvB forms 2 homohexamers on either side of HJ DNA bound by 1 or 2 RuvA tetramers; 4 subunits per hexamer contact DNA at a time. Coordinated motions by a converter formed by DNA-disengaged RuvB subunits stimulates ATP hydrolysis and nucleotide exchange. Immobilization of the converter enables RuvB to convert the ATP-contained energy into a lever motion, pulling 2 nucleotides of DNA out of the RuvA tetramer per ATP hydrolyzed, thus driving DNA branch migration. The RuvB motors rotate together with the DNA substrate, which together with the progressing nucleotide cycle form the mechanistic basis for DNA recombination by continuous HJ branch migration. Branch migration allows RuvC to scan DNA until it finds its consensus sequence, where it cleaves and resolves cruciform DNA. The chain is Holliday junction branch migration complex subunit RuvB from Paraburkholderia xenovorans (strain LB400).